Here is a 430-residue protein sequence, read N- to C-terminus: 3-phosphoshikimate 1-carboxyvinyltransferase (430 aa).

A disordered region spans residues 1–20 (MHATVSPSRVRGRARAPPSK). Residues Lys20, Ser21, and Arg25 each coordinate 3-phosphoshikimate. Lys20 provides a ligand contact to phosphoenolpyruvate. Phosphoenolpyruvate-binding residues include Gly91 and Arg119. Residues Ser164, Ser165, Gln166, Ser192, Asp312, and Lys339 each contribute to the 3-phosphoshikimate site. Gln166 is a phosphoenolpyruvate binding site. The active-site Proton acceptor is the Asp312. Positions 343 and 386 each coordinate phosphoenolpyruvate.

It belongs to the EPSP synthase family. As to quaternary structure, monomer.

It localises to the cytoplasm. It catalyses the reaction 3-phosphoshikimate + phosphoenolpyruvate = 5-O-(1-carboxyvinyl)-3-phosphoshikimate + phosphate. Its pathway is metabolic intermediate biosynthesis; chorismate biosynthesis. Functionally, catalyzes the transfer of the enolpyruvyl moiety of phosphoenolpyruvate (PEP) to the 5-hydroxyl of shikimate-3-phosphate (S3P) to produce enolpyruvyl shikimate-3-phosphate and inorganic phosphate. This Halobacterium salinarum (strain ATCC 29341 / DSM 671 / R1) protein is 3-phosphoshikimate 1-carboxyvinyltransferase.